A 263-amino-acid polypeptide reads, in one-letter code: MGDLWVLLFSSLSLAAFHGVRGCLECDPKFTEDVRTLLGNLVPLEVPDRNQLLDRQHKEITHISSKVSHKDKMLRLLAVRNVIKLREWLKDEFYRLGNETWKGVFIIQGNLLEIRQNLEKKLTQIIKNFSEVACSEDCIVIEGPVLDCWNCLRMTTRCFKGDYCQDEDPKTAENREISLYLIFIAEAVILASAVLLFHVCISHRRKMKAIRRTLKTYLEKKLEELVEMIYKDDGEKNLEFGRSNSNSLTGEPTCAESEMQTGT.

The signal sequence occupies residues 1-22; the sequence is MGDLWVLLFSSLSLAAFHGVRG. Topologically, residues 23–176 are extracellular; that stretch reads CLECDPKFTE…EDPKTAENRE (154 aa). 2 N-linked (GlcNAc...) asparagine glycosylation sites follow: Asn-98 and Asn-128. The helical transmembrane segment at 177 to 197 threads the bilayer; the sequence is ISLYLIFIAEAVILASAVLLF. Residues 198-263 lie on the Cytoplasmic side of the membrane; it reads HVCISHRRKM…CAESEMQTGT (66 aa). The disordered stretch occupies residues 241–263; that stretch reads GRSNSNSLTGEPTCAESEMQTGT.

The protein belongs to the Izumo family. As to quaternary structure, monomer and homodimer. As to expression, sperm-specific (at protein level).

The protein localises to the cell membrane. Its subcellular location is the cytoplasmic vesicle. It localises to the secretory vesicle. It is found in the acrosome inner membrane. Plays an important role in the biogenesis of the acrosome during sperm development. The protein is Izumo sperm-egg fusion protein 3 (Izumo3) of Mus musculus (Mouse).